The chain runs to 1148 residues: Small G protein signaling modulator 1 (1148 aa).

Positions 36-190 constitute an RUN domain; the sequence is HEDSSHIISF…EYTKMKTADH (155 aa). The segment at 256-297 is important for interaction with RAB9A and RAB9B; that stretch reads LLYGKNNVLVQPRDDMEAVPGYLSLHQTADVMTLKWTPNQLM. The segment at 301–350 is required for interaction with RAP family members; it reads VGDLDYEKSVYWDYAMTIRLEEIVYLHCHQQVDSGGTVVLVSQDGIQRPP. 3 disordered regions span residues 377-411, 700-830, and 871-894; these read DPPL…DKDD, DSTI…PREE, and GWRS…EEPE. Over residues 385 to 397 the composition is skewed to basic residues; the sequence is GKGKVFPKLRKRS. Residues 617 to 1081 form the Rab-GAP TBC domain; the sequence is GIQPEIRKAV…LVWETIWAAK (465 aa). Polar residues predominate over residues 702–716; the sequence is TISNESSQSCSSGRQ. The segment covering 742–751 has biased composition (basic and acidic residues); it reads AEGRLEEKQP. Over residues 757–802 the composition is skewed to polar residues; the sequence is NLVNGTCSPDSGHPSSHNFSSGLSEHSEPSLSTEDSVLDAQRNTPT. Basic and acidic residues-rich tracts occupy residues 805–816 and 871–883; these read RPRDGSVDDRQS and GWRS…HGQA. Residues 884–894 are compositionally biased toward acidic residues; sequence DSEDNLSEEPE.

Belongs to the RUTBC family. As to quaternary structure, interacts with RAB9A (GTP-bound form) and RAB9B (GTP-bound form); has much lower affinity for GDP-bound RAB9A and RAB9B. Interacts with RAB3A, RAB4A, RAB5A, RAB8A, RAB11A, RAP1A, RAP1B, RAP2A and RAP2B. No interaction with RAB27A. In terms of tissue distribution, mainly expressed in brain, heart and testis.

Its subcellular location is the golgi apparatus. The protein localises to the trans-Golgi network. The protein resides in the cytoplasmic vesicle membrane. It is found in the cytoplasm. Its function is as follows. Interacts with numerous Rab family members, functioning as Rab effector for some, and as GTPase activator for others. Promotes GTP hydrolysis by RAB34 and RAB36. Probably functions as a GTPase effector with RAB9A and RAB9B; does not stimulate GTP hydrolysis with RAB9A and RAB9B. The polypeptide is Small G protein signaling modulator 1 (SGSM1) (Homo sapiens (Human)).